Consider the following 434-residue polypeptide: Beta-enolase (434 aa).

Ala-2 is modified (N-acetylalanine). At Thr-72 the chain carries Phosphothreonine. Residues Ser-83 and Ser-157 each carry the phosphoserine modification. Substrate-binding residues include His-158 and Glu-167. Ser-176 is subject to Phosphoserine. Thr-205 is subject to Phosphothreonine. The Proton donor role is filled by Glu-210. Phosphothreonine is present on Thr-229. A Phosphotyrosine modification is found at Tyr-236. Asp-245 is a Mg(2+) binding site. Ser-263 carries the post-translational modification Phosphoserine. 2 residues coordinate substrate: Glu-293 and Asp-318. Mg(2+) is bound by residues Glu-293 and Asp-318. Catalysis depends on Lys-343, which acts as the Proton acceptor. Substrate contacts are provided by residues 370–373 and Lys-394; that span reads SHRS.

The protein belongs to the enolase family. As to quaternary structure, mammalian enolase is composed of 3 isozyme subunits, alpha, beta and gamma, which can form homodimers or heterodimers which are cell-type and development-specific. Interacts with PNKD. It depends on Mg(2+) as a cofactor. As to expression, the alpha/alpha homodimer is expressed in embryo and in most adult tissues. The alpha/beta heterodimer and the beta/beta homodimer are found in striated muscle, and the alpha/gamma heterodimer and the gamma/gamma homodimer in neurons.

The protein localises to the cytoplasm. It carries out the reaction (2R)-2-phosphoglycerate = phosphoenolpyruvate + H2O. It functions in the pathway carbohydrate degradation; glycolysis; pyruvate from D-glyceraldehyde 3-phosphate: step 4/5. In terms of biological role, glycolytic enzyme that catalyzes the conversion of 2-phosphoglycerate to phosphoenolpyruvate. Appears to have a function in striated muscle development and regeneration. The protein is Beta-enolase (ENO3) of Oryctolagus cuniculus (Rabbit).